We begin with the raw amino-acid sequence, 399 residues long: MSTAIDELQAIIAELKTELEEQKTSTRIARERIERMSAEVVDSNPYSRLMALQRMNIVKDYERIRDKAVAIVGVGGVGSVTADMLTRCGIGKLILFDYDKVELANMNRLFFTPDQAGLSKVEAAARTLSFINPDVVIETHNYNITTVENFDKFLTTISESGLQKGQPVDLVLSCVDNFEARMAINAACNENNLNWFESGVSENAVSGHIQFIRPGETACFACAPPLVVAENIDERTLKREGVCAASLPTTMGITAGLLVQNALKYLLNFGEVSDYLGYNALNDFFPKMTLKPNAECDDRYCLQRQKEFQARPQPKEQQIDEVVSNEPLHASNDWGIELVAEDAPVEQQTTNTTNVASGLRLAYEAPDKVDVNQSESAAVVNAGLPETSLDDLMAQMKSM.

Positions 76, 97, 120, 143, and 177 each coordinate ATP. Zn(2+)-binding residues include Cys-219 and Cys-222. The active-site Glycyl thioester intermediate is the Cys-243. Residues Cys-296 and Cys-301 each coordinate Zn(2+).

Belongs to the ubiquitin-activating E1 family. UBA5 subfamily.

Its function is as follows. E1-like enzyme which activates UFM1. This Drosophila mojavensis (Fruit fly) protein is Ubiquitin-like modifier-activating enzyme 5.